Here is a 196-residue protein sequence, read N- to C-terminus: Nucleoid occlusion factor SlmA (196 aa).

Residues 7-68 form the HTH tetR-type domain; that stretch reads TNRREEILQA…GLIEFIEEAL (62 aa). Residues 31–50 constitute a DNA-binding region (H-T-H motif); it reads TTAKLAKQVGVSEAALYRHF. Residues 110–142 adopt a coiled-coil conformation; that stretch reads HALMFENERLRDRINQLFERIETQLRQILRERK.

This sequence belongs to the nucleoid occlusion factor SlmA family. Homodimer. Interacts with FtsZ.

The protein resides in the cytoplasm. Its subcellular location is the nucleoid. Functionally, required for nucleoid occlusion (NO) phenomenon, which prevents Z-ring formation and cell division over the nucleoid. Acts as a DNA-associated cell division inhibitor that binds simultaneously chromosomal DNA and FtsZ, and disrupts the assembly of FtsZ polymers. SlmA-DNA-binding sequences (SBS) are dispersed on non-Ter regions of the chromosome, preventing FtsZ polymerization at these regions. The polypeptide is Nucleoid occlusion factor SlmA (Vibrio campbellii (strain ATCC BAA-1116)).